The sequence spans 208 residues: Coiled-coil domain-containing protein 25 (208 aa).

Topologically, residues methionine 1–aspartate 105 are extracellular. The interval lysine 21–glutamate 25 is DNA-binding. At lysine 23 the chain carries N6-acetyllysine. The chain crosses the membrane as a helical span at residues valine 106–valine 122. Residues valine 117–serine 187 adopt a coiled-coil conformation. Over glutamate 123–methionine 208 the chain is Cytoplasmic. A compositionally biased stretch (basic and acidic residues) spans leucine 144 to arginine 184. Residues leucine 144–methionine 208 are disordered. A Phosphoserine modification is found at serine 204.

The protein belongs to the CCDC25 family. In terms of assembly, interacts (via cytoplasmic region) with ILK.

It localises to the cell membrane. The protein localises to the endomembrane system. Its function is as follows. Transmembrane receptor that senses neutrophil extracellular traps (NETs) and triggers the ILK-PARVB pathway to enhance cell motility. NETs are mainly composed of DNA fibers and are released by neutrophils to bind pathogens during inflammation. Formation of NETs is also associated with cancer metastasis, NET-DNA acting as a chemotactic factor to attract cancer cells. Specifically binds NETs on its extracellular region, in particular the 8-OHdG-enriched DNA present in NETs, and recruits ILK, initiating the ILK-PARVB cascade to induce cytoskeleton rearrangement and directional migration of cells. In the context of cancer, promotes cancer metastasis by sensing NETs and promoting migration of tumor cells. In Mus musculus (Mouse), this protein is Coiled-coil domain-containing protein 25.